The chain runs to 507 residues: Histidine ammonia-lyase (507 aa).

The 5-imidazolinone (Ala-Gly) cross-link spans Ala141–Gly143. Ser142 carries the post-translational modification 2,3-didehydroalanine (Ser).

This sequence belongs to the PAL/histidase family. Contains an active site 4-methylidene-imidazol-5-one (MIO), which is formed autocatalytically by cyclization and dehydration of residues Ala-Ser-Gly.

Its subcellular location is the cytoplasm. It catalyses the reaction L-histidine = trans-urocanate + NH4(+). It functions in the pathway amino-acid degradation; L-histidine degradation into L-glutamate; N-formimidoyl-L-glutamate from L-histidine: step 1/3. This Paraburkholderia phytofirmans (strain DSM 17436 / LMG 22146 / PsJN) (Burkholderia phytofirmans) protein is Histidine ammonia-lyase.